Reading from the N-terminus, the 454-residue chain is UDP-N-acetylmuramoyl-tripeptide--D-alanyl-D-alanine ligase (454 aa).

Position 116-122 (116-122 (GSVGKTT)) interacts with ATP.

It belongs to the MurCDEF family. MurF subfamily.

It localises to the cytoplasm. It carries out the reaction D-alanyl-D-alanine + UDP-N-acetyl-alpha-D-muramoyl-L-alanyl-gamma-D-glutamyl-meso-2,6-diaminopimelate + ATP = UDP-N-acetyl-alpha-D-muramoyl-L-alanyl-gamma-D-glutamyl-meso-2,6-diaminopimeloyl-D-alanyl-D-alanine + ADP + phosphate + H(+). It functions in the pathway cell wall biogenesis; peptidoglycan biosynthesis. In terms of biological role, involved in cell wall formation. Catalyzes the final step in the synthesis of UDP-N-acetylmuramoyl-pentapeptide, the precursor of murein. This is UDP-N-acetylmuramoyl-tripeptide--D-alanyl-D-alanine ligase from Synechocystis sp. (strain ATCC 27184 / PCC 6803 / Kazusa).